The chain runs to 1445 residues: ABC-type transporter FGSG_00046 (1445 aa).

Transmembrane regions (helical) follow at residues 21 to 41 (LFEECFLDILPWSLFLLMLLV), 77 to 97 (LILWASIAAFTTAGTVPAAAL), 119 to 138 (PSSLLGILTLLILLCDVTRV), 150 to 170 (ISILTTAALPINILLLVFESL), 187 to 207 (EIVGILNRSVFWWLNSLFILG), 255 to 277 (TLLRGGLCRLFTALFVTSQPLLL), 297 to 317 (YGLIGAYLVVYGGRAVFTALA), 368 to 388 (LQFVHEIWATPAEFGVAIFLL), 392 to 412 (VALGSLAPVIIIIVAIVGTVL), 481 to 501 (VFSTATATISPVLGFTIYVLM), and 520 to 540 (SLFSILSSSVYIFLTSVPAIF). Residues 259–541 (GGLCRLFTAL…FLTSVPAIFS (283 aa)) form the ABC transmembrane type-1 1 domain. In terms of domain architecture, ABC transporter 1 spans 595 to 821 (IRDGSVRWKG…DEIEASTYSR (227 aa)). 627-634 (GSVGSGKS) is an ATP binding site. Residues 803–850 (RNTQKDMQDDEIEASTYSREQNGPKKQEEDANHESNQSPETSQEHELA) form a disordered region. The segment covering 824–835 (NGPKKQEEDANH) has biased composition (basic and acidic residues). Transmembrane regions (helical) follow at residues 868–888 (GMGFFALSFSLSLVYSFWQNF), 912–932 (IGVYILCAVLALVTHTVVTWF), 1004–1024 (IPLTGVQALFAFTSALVQLVM), 1026–1046 (SIGTKWMAITFPFIIAILAII), 1116–1136 (LTLVLNLVIGAMAILMMGVTI), and 1147–1167 (IGLAFVNLTTFSQSIQSLLTW). The ABC transmembrane type-1 2 domain maps to 974 to 1173 (HRAPMSYFES…LLTWWTMMEA (200 aa)). The ABC transporter 2 domain maps to 1210–1441 (IELKELSASY…DVSLFQDLFS (232 aa)). 1244-1251 (GRTGSGKT) serves as a coordination point for ATP.

Belongs to the ABC transporter superfamily. ABCC family.

Its subcellular location is the cell membrane. ABC-type transporter; part of the gene cluster that mediates the biosynthesis of gramillins A and B, bicyclic lipopeptides that induce cell death in maize leaves but not in wheat leaves. May be involved in the secretion of gramillins. The sequence is that of ABC-type transporter FGSG_00046 from Gibberella zeae (strain ATCC MYA-4620 / CBS 123657 / FGSC 9075 / NRRL 31084 / PH-1) (Wheat head blight fungus).